Consider the following 182-residue polypeptide: Adenine phosphoribosyltransferase (182 aa).

This sequence belongs to the purine/pyrimidine phosphoribosyltransferase family. Homodimer.

It is found in the cytoplasm. The catalysed reaction is AMP + diphosphate = 5-phospho-alpha-D-ribose 1-diphosphate + adenine. The protein operates within purine metabolism; AMP biosynthesis via salvage pathway; AMP from adenine: step 1/1. Its function is as follows. Catalyzes a salvage reaction resulting in the formation of AMP, that is energically less costly than de novo synthesis. The sequence is that of Adenine phosphoribosyltransferase from Stutzerimonas stutzeri (strain A1501) (Pseudomonas stutzeri).